Consider the following 553-residue polypeptide: Interleukin-20 receptor subunit alpha (553 aa).

Residues 1-29 form the signal peptide; the sequence is MRAPGRPALRPLPLPPLLLLLLAAPWGRA. At 30–250 the chain is on the extracellular side; the sequence is VPCVSGGLPK…KDQSSEFKAK (221 aa). Fibronectin type-III domains are found at residues 37–135 and 136–242; these read LPKP…FLET and QIGP…TLKD. Residues Asn-42, Asn-83, Asn-91, Asn-182, Asn-191, and Asn-200 are each glycosylated (N-linked (GlcNAc...) asparagine). Cys-87 and Cys-95 form a disulfide bridge. A disulfide bond links Cys-215 and Cys-236. Residues 251–271 form a helical membrane-spanning segment; the sequence is IIFWYVLPVSITVFLFSVMGY. Residues 272–553 lie on the Cytoplasmic side of the membrane; sequence SIYRYIHVGK…EWGLYVQMEN (282 aa). Disordered regions lie at residues 333-353 and 462-515; these read SSDV…PPQE and QEHT…LGEE. Residues 334-346 are compositionally biased toward polar residues; the sequence is SDVSSLNDPQPSG. Residues 499 to 513 are compositionally biased toward acidic residues; that stretch reads QDSEGCEPSEGDGLG.

This sequence belongs to the type II cytokine receptor family. In terms of assembly, heterodimer with IL20RB and heterodimer with IL10RB. In terms of tissue distribution, widely expressed with highest levels in skin and testis and high levels in brain. Highly expressed in psoriatic skin.

The protein localises to the membrane. Its function is as follows. The IL20RA/IL20RB dimer is a receptor for IL19, IL20 and IL24. The IL20RA/IL10RB dimer is a receptor for IL26. The chain is Interleukin-20 receptor subunit alpha (IL20RA) from Homo sapiens (Human).